Reading from the N-terminus, the 310-residue chain is tRNA pseudouridine synthase B (310 aa).

The active-site Nucleophile is D47.

It belongs to the pseudouridine synthase TruB family. Type 1 subfamily.

It catalyses the reaction uridine(55) in tRNA = pseudouridine(55) in tRNA. Functionally, responsible for synthesis of pseudouridine from uracil-55 in the psi GC loop of transfer RNAs. This chain is tRNA pseudouridine synthase B, found in Caulobacter sp. (strain K31).